Consider the following 292-residue polypeptide: tRNA pseudouridine synthase B (292 aa).

Residue aspartate 38 is the Nucleophile of the active site.

This sequence belongs to the pseudouridine synthase TruB family. Type 1 subfamily.

It carries out the reaction uridine(55) in tRNA = pseudouridine(55) in tRNA. In terms of biological role, responsible for synthesis of pseudouridine from uracil-55 in the psi GC loop of transfer RNAs. The chain is tRNA pseudouridine synthase B from Streptococcus pneumoniae serotype 2 (strain D39 / NCTC 7466).